Consider the following 179-residue polypeptide: Ribosome maturation factor RimM (179 aa).

The 77-residue stretch at 100 to 176 folds into the PRC barrel domain; it reads KEEFHLLELI…FIIINPPNGL (77 aa).

It belongs to the RimM family. In terms of assembly, binds ribosomal protein uS19.

Its subcellular location is the cytoplasm. In terms of biological role, an accessory protein needed during the final step in the assembly of 30S ribosomal subunit, possibly for assembly of the head region. Essential for efficient processing of 16S rRNA. May be needed both before and after RbfA during the maturation of 16S rRNA. It has affinity for free ribosomal 30S subunits but not for 70S ribosomes. The protein is Ribosome maturation factor RimM of Prochlorococcus marinus (strain MIT 9215).